An 832-amino-acid chain; its full sequence is Cation/H(+) antiporter 21 (832 aa).

Helical transmembrane passes span 33 to 55 (ISAAAPFFMTQLSVANLTYRILY), 61 to 81 (LCLPPFVAQILCGLLFSPTVL), 99 to 119 (LLETFANLALVYNVFLLGLGL), 132 to 152 (VIIAIVGLLAALLAGAGLYYL), 161 to 181 (ILAGCMYWSIAFGCTNFPDLA), 200 to 220 (CAAVVTDLCTWILFIFGMAIF), 236 to 256 (STIAFVLLCYFVIQPGVAWIF), 278 to 298 (IICSLITEVCGVHSITGAFLF), 319 to 339 (FLSGMLMPLFYIICGLRADIG), 352 to 372 (VVTSASVMVKILSTMFCSIFL), 379 to 399 (GLAIGALMNTKGTMALVILNA), and 413 to 433 (HLTLAFLVMSMVVQPLLAIAY). Polar residues predominate over residues 792-802 (RQTAENNNQEP). Residues 792–832 (RQTAENNNQEPVQGKAKTDHEATPFMEDEDDEVEHQYSMRR) form a disordered region.

It belongs to the monovalent cation:proton antiporter 2 (CPA2) transporter (TC 2.A.37) family. CHX (TC 2.A.37.4) subfamily. Specifically expressed in root endodermal cells. Expressed in seedlings, roots, leaves, flowers, flower buds and pollen.

The protein localises to the cell membrane. Operates as a Na(+)/H(+) antiporter that plays a role in regulation of xylem Na(+) concentration and, consequently, Na(+) accumulation in the leaf. Required for pollen tube guidance, but not for normal pollen development. May also be involved in the development or function of the female gametophyte. This chain is Cation/H(+) antiporter 21 (CHX21), found in Arabidopsis thaliana (Mouse-ear cress).